The chain runs to 780 residues: MEVEKYDLTLDFDIQKRTFNGTETITADAGDIVLDAVGLQINWMKVNGRDTAFTYDGQTVRAPGDSQPQKIEISFAGKVSDSLSGIYYAGRENGMITTHFEATDARRMFPCVDHPAYKAVFAITVVIDKDYDAISNMPPKRIEVSERKVVEFQDTPRMSTYLLYVGIGKFRYEYEKYRDIDLILASLKDIRSKYPLDMARKSVEFYENYFGIPYALPKMHLISVPEFGAGAMENWGAITFREIYMDIAENSAVTVKRNSANVIAHEIAHQWFGDLVTMKWWNDLWLNESFATFMSYKTMDTLFPEWSFWGDFFVSRTSGALRSDSLKNTHPIEVDVRDPDEISQIFDEISYGKGASILRMIEDYAGYEEFRKGISKYLNDHKFGNAEGSDLWTAIEDVSGKPVKRVMEYWIKNPGYPVIKLKRNGRKITMYQTRFLLNGEEEGRWPVPVNIKKKDGVERILLEDEASIEADGLIKINADSAGFYRVLYDDATFSDVMGHYRDLSPLDRIGLVDDLFAFLLSGHIDPETYRQRIRNFFDDEDHNVITAIVGQMEYLRMLTHAFDDDARAFCRSRMQFLTGKQDENLKIALGRVSRLYVMVDESYAEEMSKLFKDFDSAEPEMRSSIATAYALVTGDLKGLLEKFRSVDRDEDRVRIISAFGKLKSNTDLSTVYGMVEKTEIKKQDMISFFSSALETLPGREFIFANLDRIIRLVIRYFTGNRTASRTVEMMIPVIGLDHPDAEDIVRNIGSKNISMGLAKGIEMLAVNRKLVERIRQTAVK.

Substrate contacts are provided by residues Glu101 and 230–234 (GAMEN). His265 provides a ligand contact to Zn(2+). Residue Glu266 is the Proton acceptor of the active site. Zn(2+) contacts are provided by His269 and Glu288.

Belongs to the peptidase M1 family. In terms of assembly, part of the tricorn proteolytic complex. Requires Zn(2+) as cofactor.

The protein localises to the cytoplasm. Functionally, proteases F1, F2 and F3 degrade oligopeptides produced by Tricorn (themselves probably produced by the proteasome), yielding free amino acids. This chain is Tricorn protease-interacting factor F3 (trf3), found in Thermoplasma acidophilum (strain ATCC 25905 / DSM 1728 / JCM 9062 / NBRC 15155 / AMRC-C165).